The following is a 252-amino-acid chain: 5'-nucleotidase SurE (252 aa).

4 residues coordinate a divalent metal cation: Asp8, Asp9, Ser39, and Asn91.

This sequence belongs to the SurE nucleotidase family. A divalent metal cation serves as cofactor.

It localises to the cytoplasm. The enzyme catalyses a ribonucleoside 5'-phosphate + H2O = a ribonucleoside + phosphate. Its function is as follows. Nucleotidase that shows phosphatase activity on nucleoside 5'-monophosphates. The polypeptide is 5'-nucleotidase SurE (Bordetella avium (strain 197N)).